We begin with the raw amino-acid sequence, 64 residues long: Large ribosomal subunit protein uL30 (64 aa).

It belongs to the universal ribosomal protein uL30 family. In terms of assembly, part of the 50S ribosomal subunit.

The protein is Large ribosomal subunit protein uL30 of Methylorubrum extorquens (strain CM4 / NCIMB 13688) (Methylobacterium extorquens).